Reading from the N-terminus, the 296-residue chain is tRNA pseudouridine synthase B (296 aa).

The active-site Nucleophile is D38.

The protein belongs to the pseudouridine synthase TruB family. Type 1 subfamily.

The catalysed reaction is uridine(55) in tRNA = pseudouridine(55) in tRNA. In terms of biological role, responsible for synthesis of pseudouridine from uracil-55 in the psi GC loop of transfer RNAs. This Ehrlichia ruminantium (strain Gardel) protein is tRNA pseudouridine synthase B.